A 475-amino-acid chain; its full sequence is Ribulose bisphosphate carboxylase large chain (475 aa).

Positions 1-2 (MS) are excised as a propeptide. N-acetylproline is present on proline 3. At lysine 14 the chain carries N6,N6,N6-trimethyllysine. Residues asparagine 123 and threonine 173 each coordinate substrate. Lysine 175 acts as the Proton acceptor in catalysis. Lysine 177 contacts substrate. Mg(2+) contacts are provided by lysine 201, aspartate 203, and glutamate 204. Position 201 is an N6-carboxylysine (lysine 201). Histidine 294 acts as the Proton acceptor in catalysis. Residues arginine 295, histidine 327, and serine 379 each contribute to the substrate site.

Belongs to the RuBisCO large chain family. Type I subfamily. Heterohexadecamer of 8 large chains and 8 small chains; disulfide-linked. The disulfide link is formed within the large subunit homodimers. The cofactor is Mg(2+). The disulfide bond which can form in the large chain dimeric partners within the hexadecamer appears to be associated with oxidative stress and protein turnover.

It is found in the plastid. The protein resides in the chloroplast. It catalyses the reaction 2 (2R)-3-phosphoglycerate + 2 H(+) = D-ribulose 1,5-bisphosphate + CO2 + H2O. The enzyme catalyses D-ribulose 1,5-bisphosphate + O2 = 2-phosphoglycolate + (2R)-3-phosphoglycerate + 2 H(+). In terms of biological role, ruBisCO catalyzes two reactions: the carboxylation of D-ribulose 1,5-bisphosphate, the primary event in carbon dioxide fixation, as well as the oxidative fragmentation of the pentose substrate in the photorespiration process. Both reactions occur simultaneously and in competition at the same active site. The sequence is that of Ribulose bisphosphate carboxylase large chain from Picea abies (Norway spruce).